A 360-amino-acid polypeptide reads, in one-letter code: UDP-3-O-acylglucosamine N-acyltransferase (360 aa).

Catalysis depends on His248, which acts as the Proton acceptor.

Belongs to the transferase hexapeptide repeat family. LpxD subfamily. Homotrimer.

It catalyses the reaction a UDP-3-O-[(3R)-3-hydroxyacyl]-alpha-D-glucosamine + a (3R)-hydroxyacyl-[ACP] = a UDP-2-N,3-O-bis[(3R)-3-hydroxyacyl]-alpha-D-glucosamine + holo-[ACP] + H(+). It functions in the pathway bacterial outer membrane biogenesis; LPS lipid A biosynthesis. In terms of biological role, catalyzes the N-acylation of UDP-3-O-acylglucosamine using 3-hydroxyacyl-ACP as the acyl donor. Is involved in the biosynthesis of lipid A, a phosphorylated glycolipid that anchors the lipopolysaccharide to the outer membrane of the cell. This chain is UDP-3-O-acylglucosamine N-acyltransferase, found in Chlamydia pneumoniae (Chlamydophila pneumoniae).